We begin with the raw amino-acid sequence, 143 residues long: Large ribosomal subunit protein uL11 (143 aa).

This sequence belongs to the universal ribosomal protein uL11 family. In terms of assembly, part of the ribosomal stalk of the 50S ribosomal subunit. Interacts with L10 and the large rRNA to form the base of the stalk. L10 forms an elongated spine to which L12 dimers bind in a sequential fashion forming a multimeric L10(L12)X complex. One or more lysine residues are methylated.

In terms of biological role, forms part of the ribosomal stalk which helps the ribosome interact with GTP-bound translation factors. This chain is Large ribosomal subunit protein uL11, found in Burkholderia multivorans (strain ATCC 17616 / 249).